Consider the following 189-residue polypeptide: Small ribosomal subunit protein uS7 (189 aa).

This sequence belongs to the universal ribosomal protein uS7 family. Part of the 30S ribosomal subunit.

One of the primary rRNA binding proteins, it binds directly to 16S rRNA where it nucleates assembly of the head domain of the 30S subunit. Is located at the subunit interface close to the decoding center. This chain is Small ribosomal subunit protein uS7, found in Methanosarcina acetivorans (strain ATCC 35395 / DSM 2834 / JCM 12185 / C2A).